Consider the following 428-residue polypeptide: UPF0053 inner membrane protein YfjD (428 aa).

The Cytoplasmic segment spans residues 1 to 3; the sequence is MEH. The CNNM transmembrane domain maps to 2–192; the sequence is EHISTTTLII…SQISRRNQDM (191 aa). Residues 4 to 24 traverse the membrane as a helical segment; it reads ISTTTLIIILIIMVVISAYFS. Residues 25–64 are Periplasmic-facing; sequence GSETGMMTLNRYRLRHMAKQGNRSAKRVEKLLRKPDRLIS. The helical transmembrane segment at 65–85 threads the bilayer; the sequence is LVLIGNNLVNILASALGTIVG. Residues 86–91 lie on the Cytoplasmic side of the membrane; sequence MRLYGD. A helical membrane pass occupies residues 92–112; sequence AGVAIATGVLTFVVLVFAEVL. Topologically, residues 113–129 are periplasmic; that stretch reads PKTIAALYPEKVAYPSS. Residues 130–150 form a helical membrane-spanning segment; that stretch reads FLLAPLQILMMPLVWLLNAIT. Residues 151–428 are Cytoplasmic-facing; sequence RMLMRMMGIK…VKPLRESVAE (278 aa). CBS domains follow at residues 208-270 and 272-332; these read MVPR…FTKE and MLRA…FTTS.

Belongs to the UPF0053 family.

The protein localises to the cell inner membrane. In Escherichia coli (strain K12), this protein is UPF0053 inner membrane protein YfjD (yfjD).